Consider the following 356-residue polypeptide: UDP-N-acetylglucosamine--N-acetylmuramyl-(pentapeptide) pyrophosphoryl-undecaprenol N-acetylglucosamine transferase (356 aa).

Residues Arg166, Ser196, and Gln290 each coordinate UDP-N-acetyl-alpha-D-glucosamine.

This sequence belongs to the glycosyltransferase 28 family. MurG subfamily.

It localises to the cell membrane. It catalyses the reaction Mur2Ac(oyl-L-Ala-gamma-D-Glu-L-Lys-D-Ala-D-Ala)-di-trans,octa-cis-undecaprenyl diphosphate + UDP-N-acetyl-alpha-D-glucosamine = beta-D-GlcNAc-(1-&gt;4)-Mur2Ac(oyl-L-Ala-gamma-D-Glu-L-Lys-D-Ala-D-Ala)-di-trans,octa-cis-undecaprenyl diphosphate + UDP + H(+). It functions in the pathway cell wall biogenesis; peptidoglycan biosynthesis. Cell wall formation. Catalyzes the transfer of a GlcNAc subunit on undecaprenyl-pyrophosphoryl-MurNAc-pentapeptide (lipid intermediate I) to form undecaprenyl-pyrophosphoryl-MurNAc-(pentapeptide)GlcNAc (lipid intermediate II). The protein is UDP-N-acetylglucosamine--N-acetylmuramyl-(pentapeptide) pyrophosphoryl-undecaprenol N-acetylglucosamine transferase of Staphylococcus aureus (strain Mu3 / ATCC 700698).